The primary structure comprises 261 residues: Malonyl-[acyl-carrier protein] O-methyltransferase (261 aa).

Belongs to the methyltransferase superfamily.

It carries out the reaction malonyl-[ACP] + S-adenosyl-L-methionine = malonyl-[ACP] methyl ester + S-adenosyl-L-homocysteine. The protein operates within cofactor biosynthesis; biotin biosynthesis. Converts the free carboxyl group of a malonyl-thioester to its methyl ester by transfer of a methyl group from S-adenosyl-L-methionine (SAM). It allows to synthesize pimeloyl-ACP via the fatty acid synthetic pathway. This chain is Malonyl-[acyl-carrier protein] O-methyltransferase, found in Bacteroides thetaiotaomicron (strain ATCC 29148 / DSM 2079 / JCM 5827 / CCUG 10774 / NCTC 10582 / VPI-5482 / E50).